The following is a 125-amino-acid chain: Casein kinase I isoform alpha (125 aa).

Positions 1-125 (GEEVAVKLES…LIDFGLAKKY (125 aa)) constitute a Protein kinase domain. Lys-7 is an ATP binding site. Asp-97 serves as the catalytic Proton acceptor.

Belongs to the protein kinase superfamily. CK1 Ser/Thr protein kinase family. Casein kinase I subfamily. In terms of assembly, interacts with the Axin complex. Interacts with TUT1, leading to TUT1 phosphorylation. Interacts with FAM83A, FAM83B, FAM83C, FAM83D, FAM83E, FAM83F, FAM83G and FAM83H (via DUF1669). Interaction with FAM83H recruits CSNK1A1 to keratin filaments. Post-translationally, phosphorylated by MTOR in response to mitogenic stimulation, leading to its activation.

It localises to the cytoplasm. Its subcellular location is the cytoskeleton. The protein localises to the microtubule organizing center. It is found in the centrosome. The protein resides in the chromosome. It localises to the centromere. Its subcellular location is the kinetochore. The protein localises to the nucleus speckle. It is found in the cilium basal body. The protein resides in the spindle. It carries out the reaction L-seryl-[protein] + ATP = O-phospho-L-seryl-[protein] + ADP + H(+). The enzyme catalyses L-threonyl-[protein] + ATP = O-phospho-L-threonyl-[protein] + ADP + H(+). Casein kinases are operationally defined by their preferential utilization of acidic proteins such as caseins as substrates. It can phosphorylate a large number of proteins. Participates in Wnt signaling. Phosphorylates CTNNB1 at 'Ser-45'. May phosphorylate PER1 and PER2. May play a role in segregating chromosomes during mitosis. May play a role in keratin cytoskeleton disassembly and thereby, it may regulate epithelial cell migration. Acts as a positive regulator of mTORC1 and mTORC2 signaling in response to nutrients by mediating phosphorylation of DEPTOR inhibitor. Acts as an inhibitor of NLRP3 inflammasome assembly by mediating phosphorylation of NLRP3. In Sus scrofa (Pig), this protein is Casein kinase I isoform alpha (CSNK1A1).